We begin with the raw amino-acid sequence, 311 residues long: tRNA pseudouridine synthase B (311 aa).

Asp-49 (nucleophile) is an active-site residue.

The protein belongs to the pseudouridine synthase TruB family. Type 1 subfamily.

It catalyses the reaction uridine(55) in tRNA = pseudouridine(55) in tRNA. Responsible for synthesis of pseudouridine from uracil-55 in the psi GC loop of transfer RNAs. The chain is tRNA pseudouridine synthase B from Actinobacillus succinogenes (strain ATCC 55618 / DSM 22257 / CCUG 43843 / 130Z).